Reading from the N-terminus, the 585-residue chain is Glutamate decarboxylase 2 (585 aa).

A compositionally biased stretch (low complexity) spans 1 to 14 (MASPGSGFWSFGSE). A disordered region spans residues 1-24 (MASPGSGFWSFGSEDGSGDSENPG). A phosphoserine mark is found at Ser-3, Ser-6, Ser-10, and Ser-13. 2 S-palmitoyl cysteine lipidation sites follow: Cys-30 and Cys-45. 181–183 (QLS) contributes to the substrate binding site. Lys-396 is subject to N6-(pyridoxal phosphate)lysine. Arg-558 provides a ligand contact to substrate.

Belongs to the group II decarboxylase family. In terms of assembly, homodimer. It depends on pyridoxal 5'-phosphate as a cofactor. Phosphorylated; which does not affect kinetic parameters or subcellular location. Post-translationally, palmitoylated; which is required for presynaptic clustering.

Its subcellular location is the cytoplasm. It is found in the cytosol. It localises to the cytoplasmic vesicle. The protein resides in the presynaptic cell membrane. The protein localises to the golgi apparatus membrane. The catalysed reaction is L-glutamate + H(+) = 4-aminobutanoate + CO2. Its function is as follows. Catalyzes the production of GABA. This is Glutamate decarboxylase 2 from Homo sapiens (Human).